Consider the following 515-residue polypeptide: Maturase K (515 aa).

Belongs to the intron maturase 2 family. MatK subfamily.

The protein resides in the plastid. It is found in the chloroplast. Its function is as follows. Usually encoded in the trnK tRNA gene intron. Probably assists in splicing its own and other chloroplast group II introns. The protein is Maturase K of Picea pungens (Colorado spruce).